Reading from the N-terminus, the 359-residue chain is Phosphoserine aminotransferase (359 aa).

Arginine 41 contacts L-glutamate. Pyridoxal 5'-phosphate contacts are provided by residues 75–76 (AS), tryptophan 101, threonine 152, aspartate 171, and glutamine 194. An N6-(pyridoxal phosphate)lysine modification is found at lysine 195. A pyridoxal 5'-phosphate-binding site is contributed by 236–237 (NT).

This sequence belongs to the class-V pyridoxal-phosphate-dependent aminotransferase family. SerC subfamily. As to quaternary structure, homodimer. The cofactor is pyridoxal 5'-phosphate.

It is found in the cytoplasm. It carries out the reaction O-phospho-L-serine + 2-oxoglutarate = 3-phosphooxypyruvate + L-glutamate. The enzyme catalyses 4-(phosphooxy)-L-threonine + 2-oxoglutarate = (R)-3-hydroxy-2-oxo-4-phosphooxybutanoate + L-glutamate. The protein operates within amino-acid biosynthesis; L-serine biosynthesis; L-serine from 3-phospho-D-glycerate: step 2/3. Its pathway is cofactor biosynthesis; pyridoxine 5'-phosphate biosynthesis; pyridoxine 5'-phosphate from D-erythrose 4-phosphate: step 3/5. Its function is as follows. Catalyzes the reversible conversion of 3-phosphohydroxypyruvate to phosphoserine and of 3-hydroxy-2-oxo-4-phosphonooxybutanoate to phosphohydroxythreonine. This is Phosphoserine aminotransferase from Acinetobacter baumannii (strain ACICU).